A 162-amino-acid polypeptide reads, in one-letter code: Lipoprotein signal peptidase (162 aa).

4 consecutive transmembrane segments (helical) span residues 9 to 29 (LCLVSTIIIALDQATKALVAT), 39 to 59 (VIHGFFNLTHIMNPGGAFGLF), 66 to 86 (VRKFFFLFVSSLVALMILWLY), and 95 to 115 (VLSFGLAAIFAGAVGNLIDRF). Active-site residues include Asp122 and Asp140. Residues 136–156 (FNVADSAITIGMVVFVYHVIF) traverse the membrane as a helical segment.

This sequence belongs to the peptidase A8 family.

It is found in the cell inner membrane. It catalyses the reaction Release of signal peptides from bacterial membrane prolipoproteins. Hydrolyzes -Xaa-Yaa-Zaa-|-(S,diacylglyceryl)Cys-, in which Xaa is hydrophobic (preferably Leu), and Yaa (Ala or Ser) and Zaa (Gly or Ala) have small, neutral side chains.. The protein operates within protein modification; lipoprotein biosynthesis (signal peptide cleavage). Functionally, this protein specifically catalyzes the removal of signal peptides from prolipoproteins. This chain is Lipoprotein signal peptidase, found in Desulforapulum autotrophicum (strain ATCC 43914 / DSM 3382 / VKM B-1955 / HRM2) (Desulfobacterium autotrophicum).